Here is a 361-residue protein sequence, read N- to C-terminus: Probable purine permease 5 (361 aa).

A run of 9 helical transmembrane segments spans residues 37–57 (WILLFFSGAAMLIAFPASSLL), 70–90 (WIISWVAVAGWPITCLILLPT), 105–125 (LVLSYVVLGFLSAADNLMYAY), 134–154 (TSSLLASSSLAFSALFGYLIV), 158–178 (LNASVINSIVVITGAMAIIAL), 193–213 (YFAGFFWDIMGSALHGLIFAL), 235–255 (VMVSLTAFAFTTIGMVVSNDF), 285–305 (LGVLGATAVLFLASTVMAGVL), and 315–335 (VAAVILMHDPMSGFKILSLVL). The region spanning 75-178 (VAVAGWPITC…ITGAMAIIAL (104 aa)) is the EamA domain.

The protein belongs to the purine permeases (TC 2.A.7.14) family.

It localises to the membrane. This Arabidopsis thaliana (Mouse-ear cress) protein is Probable purine permease 5 (PUP5).